The primary structure comprises 118 residues: Acidic elicitin A1 (118 aa).

A signal peptide spans 1–20; that stretch reads MNFRALFAATVAALVGSTSA. 3 disulfide bridges follow: Cys-23–Cys-91, Cys-47–Cys-76, and Cys-71–Cys-115.

This sequence belongs to the elicitin family.

Its subcellular location is the secreted. Induces local and distal defense responses (incompatible hypersensitive reaction) in plants from the solanaceae and cruciferae families. Elicits leaf necrosis and causes the accumulation of pathogenesis-related proteins. Might interact with the lipidic molecules of the plasma membrane. The protein is Acidic elicitin A1 (B14) of Phytophthora cryptogea.